We begin with the raw amino-acid sequence, 154 residues long: Transcriptional repressor NrdR (154 aa).

Residues Cys3 to Cys34 fold into a zinc finger. The ATP-cone domain occupies Val46–Asp136.

It belongs to the NrdR family. Zn(2+) is required as a cofactor.

In terms of biological role, negatively regulates transcription of bacterial ribonucleotide reductase nrd genes and operons by binding to NrdR-boxes. This chain is Transcriptional repressor NrdR, found in Mycobacterium leprae (strain Br4923).